The primary structure comprises 117 residues: UPF0342 protein LGAS_1451 (117 aa).

The protein belongs to the UPF0342 family.

This is UPF0342 protein LGAS_1451 from Lactobacillus gasseri (strain ATCC 33323 / DSM 20243 / BCRC 14619 / CIP 102991 / JCM 1131 / KCTC 3163 / NCIMB 11718 / NCTC 13722 / AM63).